Here is a 258-residue protein sequence, read N- to C-terminus: Isoprenyl transferase 2 (258 aa).

The active site involves Asp-35. Asp-35 lines the Mg(2+) pocket. Substrate contacts are provided by residues 36–39 (GNRR), Trp-40, Arg-50, and 81–83 (SDD). Asn-84 acts as the Proton acceptor in catalysis. Residues Arg-87, Arg-207, and 213 to 215 (RLS) each bind substrate. Glu-226 is a Mg(2+) binding site.

Belongs to the UPP synthase family. In terms of assembly, homodimer. The cofactor is Mg(2+).

Functionally, catalyzes the condensation of isopentenyl diphosphate (IPP) with allylic pyrophosphates generating different type of terpenoids. The chain is Isoprenyl transferase 2 from Streptomyces coelicolor (strain ATCC BAA-471 / A3(2) / M145).